Reading from the N-terminus, the 426-residue chain is uncharacterized protein (426 aa).

It belongs to the serpin family.

This is an uncharacterized protein from Methanosarcina mazei (strain ATCC BAA-159 / DSM 3647 / Goe1 / Go1 / JCM 11833 / OCM 88) (Methanosarcina frisia).